Here is a 959-residue protein sequence, read N- to C-terminus: DNA translocase FtsK 1 (959 aa).

Transmembrane regions (helical) follow at residues 1-21 (MGLG…WRYV), 39-59 (IWLA…LTSG), and 83-103 (GWTG…PMVF). The Cytoplasmic portion of the chain corresponds to 104-959 (GHSWRQLLAR…REVIAPGGGD (856 aa)). Positions 122 to 427 (PVQADARHDE…AAPPPPAVPA (306 aa)) are disordered. The segment covering 126-136 (DARHDEADDGL) has biased composition (basic and acidic residues). Low complexity-rich tracts occupy residues 220-229 (ATPKAATQAP) and 264-286 (APSA…DAPA). Residues 287 to 298 (SAPPEPAEPSPP) are compositionally biased toward pro residues. Acidic residues predominate over residues 333 to 379 (PEPEPEPEAETEVTPEAEAEPEAEPEAEAEPEAEAEAEAEAEAEPEA). A compositionally biased stretch (low complexity) spans 380–403 (EAPAPESVAPALQEAEAATAAEAP). The FtsK domain occupies 605 to 814 (GNPVVTDLAR…FQVSSKIDSR (210 aa)). ATP is bound at residue 625 to 630 (GSGKSV).

Belongs to the FtsK/SpoIIIE/SftA family. As to quaternary structure, homohexamer. Forms a ring that surrounds DNA.

The protein resides in the cell inner membrane. Essential cell division protein that coordinates cell division and chromosome segregation. The N-terminus is involved in assembly of the cell-division machinery. The C-terminus functions as a DNA motor that moves dsDNA in an ATP-dependent manner towards the dif recombination site, which is located within the replication terminus region. Translocation stops specifically at Xer-dif sites, where FtsK interacts with the Xer recombinase, allowing activation of chromosome unlinking by recombination. FtsK orienting polar sequences (KOPS) guide the direction of DNA translocation. FtsK can remove proteins from DNA as it translocates, but translocation stops specifically at XerCD-dif site, thereby preventing removal of XerC and XerD from dif. The protein is DNA translocase FtsK 1 (ftsK1) of Ralstonia nicotianae (strain ATCC BAA-1114 / GMI1000) (Ralstonia solanacearum).